Consider the following 47-residue polypeptide: PhoP/PhoQ regulator MgrB (47 aa).

A helical transmembrane segment spans residues tryptophan 6–isoleucine 26.

This sequence belongs to the MgrB family. As to quaternary structure, may form homooligomers. Probably interacts with the periplasmic domain of PhoQ.

The protein resides in the cell inner membrane. Its function is as follows. PhoP-regulated transcription is redox-sensitive, being activated when the periplasm becomes more reducing. MgrB acts between DsbA/DsbB and PhoP/PhoQ in this pathway. Represses PhoP/PhoQ signaling, possibly by binding to the periplasmic domain of PhoQ, altering its activity and that of downstream effector PhoP. The protein is PhoP/PhoQ regulator MgrB of Salmonella gallinarum (strain 287/91 / NCTC 13346).